The primary structure comprises 274 residues: Ribosomal RNA small subunit methyltransferase A (274 aa).

The S-adenosyl-L-methionine site is built by Asn27, Leu29, Gly54, Glu75, Asp100, and Asn121.

The protein belongs to the class I-like SAM-binding methyltransferase superfamily. rRNA adenine N(6)-methyltransferase family. RsmA subfamily.

It localises to the cytoplasm. The enzyme catalyses adenosine(1518)/adenosine(1519) in 16S rRNA + 4 S-adenosyl-L-methionine = N(6)-dimethyladenosine(1518)/N(6)-dimethyladenosine(1519) in 16S rRNA + 4 S-adenosyl-L-homocysteine + 4 H(+). Specifically dimethylates two adjacent adenosines (A1518 and A1519) in the loop of a conserved hairpin near the 3'-end of 16S rRNA in the 30S particle. May play a critical role in biogenesis of 30S subunits. This is Ribosomal RNA small subunit methyltransferase A from Acinetobacter baylyi (strain ATCC 33305 / BD413 / ADP1).